The chain runs to 100 residues: Integration host factor subunit alpha (100 aa).

The interval 50 to 70 (GNFQLRDKPQRPGRNPKTGEE) is disordered.

Belongs to the bacterial histone-like protein family. In terms of assembly, heterodimer of an alpha and a beta chain.

Functionally, this protein is one of the two subunits of integration host factor, a specific DNA-binding protein that functions in genetic recombination as well as in transcriptional and translational control. In Chromobacterium violaceum (strain ATCC 12472 / DSM 30191 / JCM 1249 / CCUG 213 / NBRC 12614 / NCIMB 9131 / NCTC 9757 / MK), this protein is Integration host factor subunit alpha.